Consider the following 85-residue polypeptide: MTDKIRSVQGRVVSDKMEKSFVVAIERKVKHPLYGKFIRRTTKLHVHDENNEAKLGDLVEVRECRPISKTKSWTLVRVVEKAVIA.

This sequence belongs to the universal ribosomal protein uS17 family. Part of the 30S ribosomal subunit.

Functionally, one of the primary rRNA binding proteins, it binds specifically to the 5'-end of 16S ribosomal RNA. This Aggregatibacter actinomycetemcomitans (Actinobacillus actinomycetemcomitans) protein is Small ribosomal subunit protein uS17.